The following is a 150-amino-acid chain: MKEETALLATVTLLGVLLQAYFSLQVISARRTFHVSPPLTSGPPEFERVFRAQVNCSEYFPLFLATLWVAGIFFHEGAAALCGLFYLFARLRYFQGYARSAQHRLDPLYASARALWLLVAMAALGLLVHFLPGTLRAALFRWLQVLLPMA.

Residues 1–6 lie on the Cytoplasmic side of the membrane; that stretch reads MKEETA. A helical membrane pass occupies residues 7–27; the sequence is LLATVTLLGVLLQAYFSLQVI. Residues 28 to 48 lie on the Lumenal side of the membrane; that stretch reads SARRTFHVSPPLTSGPPEFER. Glutathione is bound at residue R30. R31 acts as the Proton donor in catalysis. Phosphoserine is present on S36. Residues 49–69 form a helical membrane-spanning segment; that stretch reads VFRAQVNCSEYFPLFLATLWV. Glutathione-binding positions include 51 to 55 and 58 to 59; these read RAQVN and EY. Residues 70–73 lie on the Cytoplasmic side of the membrane; sequence AGIF. The chain crosses the membrane as a helical span at residues 74 to 94; sequence FHEGAAALCGLFYLFARLRYF. 93 to 97 is a binding site for glutathione; the sequence is YFQGY. At 95–104 the chain is on the lumenal side; the sequence is QGYARSAQHR. The active-site Proton acceptor is the R104. The chain crosses the membrane as a helical span at residues 105–124; it reads LDPLYASARALWLLVAMAAL. Residues 125-150 are Cytoplasmic-facing; that stretch reads GLLVHFLPGTLRAALFRWLQVLLPMA.

Belongs to the MAPEG family. As to quaternary structure, homotrimer. Interacts with ALOX5AP and ALOX5. Post-translationally, phosphorylation at Ser-36 by RPS6KB1 inhibits the leukotriene-C4 synthase activity.

The protein resides in the nucleus outer membrane. It localises to the endoplasmic reticulum membrane. Its subcellular location is the nucleus membrane. The catalysed reaction is leukotriene C4 = leukotriene A4 + glutathione. The enzyme catalyses (13S,14S)-epoxy-(4Z,7Z,9E,11E,16Z,19Z)-docosahexaenoate + glutathione = (13R)-S-glutathionyl-(14S)-hydroxy-(4Z,7Z,9E,11E,16Z,19Z)-docosahexaenoate. It functions in the pathway lipid metabolism; leukotriene C4 biosynthesis. Its activity is regulated as follows. Inhibited by MK886. Functionally, catalyzes the conjugation of leukotriene A4 with reduced glutathione (GSH) to form leukotriene C4 with high specificity. Can also catalyze the transfer of a glutathionyl group from glutathione (GSH) to 13(S),14(S)-epoxy-docosahexaenoic acid to form maresin conjugate in tissue regeneration 1 (MCTR1), a bioactive lipid mediator that possess potent anti-inflammatory and proresolving actions. In Rattus norvegicus (Rat), this protein is Leukotriene C4 synthase (Ltc4s).